A 249-amino-acid polypeptide reads, in one-letter code: Dihydroneopterin 2',3'-cyclic phosphate phosphodiesterase (249 aa).

In terms of domain architecture, HD spans L58–K172.

In terms of assembly, homododecamer. Fe(2+) serves as cofactor. It depends on Zn(2+) as a cofactor.

The catalysed reaction is 7,8-dihydroneopterin 2',3'-cyclic phosphate + H2O = 7,8-dihydroneopterin 3'-phosphate + H(+). It carries out the reaction 7,8-dihydroneopterin 2',3'-cyclic phosphate + H2O = 7,8-dihydroneopterin 2'-phosphate + H(+). The protein operates within cofactor biosynthesis; 5,6,7,8-tetrahydromethanopterin biosynthesis. Its function is as follows. Cyclic phosphodiesterase that hydrolyzes the cyclic phosphate of 7,8-dihydroneopterin 2',3'-cyclic phosphate (H2N-cP) and converts it to a mixture of 7,8-dihydroneopterin 2'-phosphate (H2N-2'P) and 7,8-dihydroneopterin 3'-phosphate (H2N-3'P). Is also able to utilize other phosphodiesters as substrates in vitro: hydrolysis of bis-pNPP and pNPPC produces nitrophenyl phosphate, and that of 2',3'-cAMP produces 3'-AMP. ATP, 3',5'-cAMP, GTP, 3',5'-cGMP, and 4',5'-cFMN cannot serve as substrates. The sequence is that of Dihydroneopterin 2',3'-cyclic phosphate phosphodiesterase (mptB) from Methanocaldococcus jannaschii (strain ATCC 43067 / DSM 2661 / JAL-1 / JCM 10045 / NBRC 100440) (Methanococcus jannaschii).